The following is a 274-amino-acid chain: NAD kinase (274 aa).

The active-site Proton acceptor is aspartate 60. Residues 60-61 (DG), lysine 65, 127-128 (NE), and arginine 152 each bind NAD(+).

Belongs to the NAD kinase family. A divalent metal cation serves as cofactor.

It is found in the cytoplasm. It carries out the reaction NAD(+) + ATP = ADP + NADP(+) + H(+). Functionally, involved in the regulation of the intracellular balance of NAD and NADP, and is a key enzyme in the biosynthesis of NADP. Catalyzes specifically the phosphorylation on 2'-hydroxyl of the adenosine moiety of NAD to yield NADP. The sequence is that of NAD kinase from Mycoplasmoides gallisepticum (strain R(low / passage 15 / clone 2)) (Mycoplasma gallisepticum).